The primary structure comprises 782 residues: Acetazolamide conferring resistance protein zam (782 aa).

Residues 270–579 (EVALSLESQA…QRLLKLVLTE (310 aa)) enclose the RNB domain. The S1 motif domain maps to 655 to 736 (GEIFRGLITG…YRQQIDLGAV (82 aa)). The tract at residues 737–782 (NNAPKDSANMDFDDDDEDGDEREEQDTMDWDAMEDGDDDEGGAVIF) is disordered. The span at 747-782 (DFDDDDEDGDEREEQDTMDWDAMEDGDDDEGGAVIF) shows a compositional bias: acidic residues.

It belongs to the RNR ribonuclease family.

In terms of biological role, not known; control resistance to the carbonic anhydrase inhibitor acetazolamide. The polypeptide is Acetazolamide conferring resistance protein zam (zam) (Synechocystis sp. (strain ATCC 27184 / PCC 6803 / Kazusa)).